Here is a 479-residue protein sequence, read N- to C-terminus: Putative F-box protein At1g67390 (479 aa).

The region spanning 40-88 (DDRISKLPDDVLVMILASLSTEDALKTSVLSTRWKNVWKQVPYLHFDLL) is the F-box domain.

This chain is Putative F-box protein At1g67390, found in Arabidopsis thaliana (Mouse-ear cress).